Reading from the N-terminus, the 331-residue chain is Terpene synthase 8 (331 aa).

Positions 97-102 match the DDxx(x)D/E motif motif; sequence DDFYLE. Positions 228–236 match the NDxxSxxxD/E motif motif; that stretch reads NDIYSFNKE.

It belongs to the terpene synthase family.

Terpene synthase that converts its substrate farnesyl diphosphate (FPP) into several yet unidentified sesquiterpenes. In Dictyostelium purpureum (Slime mold), this protein is Terpene synthase 8.